Consider the following 370-residue polypeptide: Aminomethyltransferase (370 aa).

It belongs to the GcvT family. In terms of assembly, the glycine cleavage system is composed of four proteins: P, T, L and H.

The catalysed reaction is N(6)-[(R)-S(8)-aminomethyldihydrolipoyl]-L-lysyl-[protein] + (6S)-5,6,7,8-tetrahydrofolate = N(6)-[(R)-dihydrolipoyl]-L-lysyl-[protein] + (6R)-5,10-methylene-5,6,7,8-tetrahydrofolate + NH4(+). The glycine cleavage system catalyzes the degradation of glycine. This Prochlorococcus marinus (strain MIT 9301) protein is Aminomethyltransferase.